The sequence spans 394 residues: MESLLLIAYAFLYLFLLSHEAEYKINADQSENSNVGRFGGNYGRLGRLSGSIHHWTGEYRGLEKRPNHSEDNPPSRGWTGEPGLDPRGEGPYVGVTDGRILKWSGEDLGWIEFAYSSPHRKNCSSHKVEPACGRPLGLSFEKKSGDLYFCDGYLGVMKVGPKGGLAEKVVDEVEGQKVMFANQMDIDEEEDAIYFNDSSDTYHFGDVFYAFLCGEKTGRAIRYDKKTKEAKVIMDRLHFPNGLALSIDGSFVLSCEVPTQLVHRYWAKGPNAGTRDIFAKLPGYADNIRRTETGDFWVALHSKKTPFSRLSMIHPWVGKFFIKTLKMELLVFLFEGGKPHAVAVKLSGKTGEIMEILEDSEGKNMKFISEVQERDGRLWFGSVFLPSVWVLDRQ.

The N-terminal stretch at 1-21 (MESLLLIAYAFLYLFLLSHEA) is a signal peptide. The segment covering 61-73 (GLEKRPNHSEDNP) has biased composition (basic and acidic residues). The interval 61–92 (GLEKRPNHSEDNPPSRGWTGEPGLDPRGEGPY) is disordered. Residues asparagine 67, asparagine 122, and asparagine 196 are each glycosylated (N-linked (GlcNAc...) asparagine).

Belongs to the strictosidine synthase family.

The protein localises to the vacuole. This chain is Protein STRICTOSIDINE SYNTHASE-LIKE 1, found in Arabidopsis thaliana (Mouse-ear cress).